The following is a 708-amino-acid chain: Protein SUPPRESSOR OF MAX2 1A (708 aa).

The disordered stretch occupies residues 248-283 (QMASKPQEKAASPPGSPVRTDLVLGPKQTETTPEKT). The EAR motif lies at 537 to 541 (FDLNE).

Belongs to the ClpA/ClpB family.

Its function is as follows. Probable component of a transcriptional corepressor complex that acts downstream of MAX2 to negatively regulate karrikins/strigolactone responses. Involved in the (-)-germacrene D signaling pathway influencing plant fitness and occurring in the stigma in a KAI2IA-dependent manner. The sequence is that of Protein SUPPRESSOR OF MAX2 1A from Petunia hybrida (Petunia).